A 173-amino-acid chain; its full sequence is Probable xanthine dehydrogenase subunit E (173 aa).

The 2Fe-2S ferredoxin-type domain maps to 14-90 (EQFRMTVNGQ…GHSITTIEGL (77 aa)). Residues Cys-52, Cys-57, Cys-60, Cys-72, Cys-110, Cys-113, Cys-145, and Cys-147 each coordinate [2Fe-2S] cluster.

As to quaternary structure, could be composed of four subunits: PucA, PucC, PucD and PucE. Requires [2Fe-2S] cluster as cofactor.

It carries out the reaction xanthine + NAD(+) + H2O = urate + NADH + H(+). The catalysed reaction is hypoxanthine + NAD(+) + H2O = xanthine + NADH + H(+). It participates in purine metabolism; hypoxanthine degradation; urate from hypoxanthine: step 1/2. The protein operates within purine metabolism; hypoxanthine degradation; urate from hypoxanthine: step 2/2. Oxidizes hypoxanthine and xanthine to uric acid. The protein is Probable xanthine dehydrogenase subunit E (pucE) of Bacillus subtilis (strain 168).